The sequence spans 391 residues: 3-ketoacyl-CoA thiolase (391 aa).

Cys-95 acts as the Acyl-thioester intermediate in catalysis. Active-site proton acceptor residues include His-347 and Cys-377.

It belongs to the thiolase-like superfamily. Thiolase family. Heterotetramer of two alpha chains (FadB) and two beta chains (FadA).

The protein resides in the cytoplasm. The enzyme catalyses an acyl-CoA + acetyl-CoA = a 3-oxoacyl-CoA + CoA. The protein operates within lipid metabolism; fatty acid beta-oxidation. In terms of biological role, catalyzes the final step of fatty acid oxidation in which acetyl-CoA is released and the CoA ester of a fatty acid two carbons shorter is formed. The sequence is that of 3-ketoacyl-CoA thiolase from Pseudomonas fluorescens (strain ATCC BAA-477 / NRRL B-23932 / Pf-5).